The primary structure comprises 107 residues: Translation initiation factor IF-1, chloroplastic (107 aa).

The S1-like domain maps to 8 to 83 (REKKNPREAK…SKGRIIYRLP (76 aa)). Positions 81–107 (RLPHKDSKRTEDSKDTEDLKDTKDSKD) are disordered. Residues 83-107 (PHKDSKRTEDSKDTEDLKDTKDSKD) are compositionally biased toward basic and acidic residues.

It belongs to the IF-1 family. Component of the 30S ribosomal translation pre-initiation complex which assembles on the 30S ribosome in the order IF-2 and IF-3, IF-1 and N-formylmethionyl-tRNA(fMet); mRNA recruitment can occur at any time during PIC assembly.

It is found in the plastid. Its subcellular location is the chloroplast. Functionally, one of the essential components for the initiation of protein synthesis. Stabilizes the binding of IF-2 and IF-3 on the 30S subunit to which N-formylmethionyl-tRNA(fMet) subsequently binds. Helps modulate mRNA selection, yielding the 30S pre-initiation complex (PIC). Upon addition of the 50S ribosomal subunit IF-1, IF-2 and IF-3 are released leaving the mature 70S translation initiation complex. This is Translation initiation factor IF-1, chloroplastic from Saccharum hybrid (Sugarcane).